Reading from the N-terminus, the 512-residue chain is Gamma-aminobutyric acid receptor subunit beta-2 (512 aa).

An N-terminal signal peptide occupies residues 1 to 25 (MWRVRKRGYFGIWSFPLIIAAVCAQ). At 26–241 (SVNDPSNMSL…LSLSFKLKRN (216 aa)) the chain is on the extracellular side. N-linked (GlcNAc...) asparagine glycosylation is found at asparagine 32 and asparagine 104. Position 121 (tyrosine 121) interacts with histamine. Cysteine 160 and cysteine 174 form a disulfide bridge. Residue asparagine 173 is glycosylated (N-linked (GlcNAc...) asparagine). Histamine contacts are provided by residues 180-181 (SY) and threonine 226. Residues tyrosine 181 and threonine 226 each contribute to the 4-aminobutanoate site. Residues 242–262 (IGYFILQTYMPSILITILSWV) traverse the membrane as a helical segment. Over 263–272 (SFWINYDASA) the chain is Cytoplasmic. A helical membrane pass occupies residues 273–292 (ARVALGITTVLTMTTINTHL). Topologically, residues 293-310 (RETLPKIPYVKAIDMYLM) are extracellular. Residues 311 to 331 (GCFVFVFMALLEYALVNYIFF) form a helical membrane-spanning segment. The Cytoplasmic portion of the chain corresponds to 332 to 490 (GRGPQRQKKA…LTDVNAIDRW (159 aa)). Residue tyrosine 441 is modified to Phosphotyrosine. The chain crosses the membrane as a helical span at residues 491–511 (SRIFFPVVFSFFNIVYWLYYV). A topological domain (extracellular) is located at residue asparagine 512.

This sequence belongs to the ligand-gated ion channel (TC 1.A.9) family. Gamma-aminobutyric acid receptor (TC 1.A.9.5) subfamily. GABRB2 sub-subfamily. Heteropentamer, formed by a combination of alpha (GABRA1-6), beta (GABRB1-3), gamma (GABRG1-3), delta (GABRD), epsilon (GABRE), rho (GABRR1-3), pi (GABRP) and theta (GABRQ) chains, each subunit exhibiting distinct physiological and pharmacological properties. Interacts with UBQLN1. May interact with KIF21B. Identified in a complex of 720 kDa composed of LHFPL4, NLGN2, GABRA1, GABRB2, GABRG2 and GABRB3. In terms of tissue distribution, isoform 1 and isoform 2 show reduced expression in schizophrenic brain. Isoform 3 shows increased expression in schizophrenic and bipolar disorder brains while isoform 4 shows reduced expression.

It localises to the postsynaptic cell membrane. The protein localises to the cell membrane. It is found in the cytoplasmic vesicle membrane. The enzyme catalyses chloride(in) = chloride(out). Its activity is regulated as follows. Allosterically activated by benzodiazepines. Allosterically activated by the anesthetic etomidate. Inhibited by the antagonist bicuculline. Potentiated by histamine. Its function is as follows. Beta subunit of the heteropentameric ligand-gated chloride channel gated by gamma-aminobutyric acid (GABA), a major inhibitory neurotransmitter in the brain. GABA-gated chloride channels, also named GABA(A) receptors (GABAAR), consist of five subunits arranged around a central pore and contain GABA active binding site(s) located at the alpha and beta subunit interface(s). When activated by GABA, GABAARs selectively allow the flow of chloride anions across the cell membrane down their electrochemical gradient. Chloride influx into the postsynaptic neuron following GABAAR opening decreases the neuron ability to generate a new action potential, thereby reducing nerve transmission. GABAARs containing alpha-1 and beta-2 or -3 subunits exhibit synaptogenic activity; the gamma-2 subunit being necessary but not sufficient to induce rapid synaptic contacts formation. Extrasynaptic beta-2 receptors contribute to the tonic GABAergic inhibition. Beta-containing GABAARs can simultaneously bind GABA and histamine where histamine binds at the interface of two neighboring beta subunits, which may be involved in the regulation of sleep and wakefulness. The chain is Gamma-aminobutyric acid receptor subunit beta-2 from Homo sapiens (Human).